The primary structure comprises 398 residues: 1-deoxy-D-xylulose 5-phosphate reductoisomerase (398 aa).

Positions 21, 22, 23, 24, 47, 50, and 127 each coordinate NADPH. Lysine 128 is a 1-deoxy-D-xylulose 5-phosphate binding site. Residue glutamate 129 participates in NADPH binding. Residue aspartate 151 participates in Mn(2+) binding. The 1-deoxy-D-xylulose 5-phosphate site is built by serine 152, glutamate 153, serine 177, and histidine 200. Glutamate 153 lines the Mn(2+) pocket. Glycine 206 contacts NADPH. 1-deoxy-D-xylulose 5-phosphate-binding residues include serine 213, asparagine 218, lysine 219, and glutamate 222. Glutamate 222 lines the Mn(2+) pocket.

Belongs to the DXR family. It depends on Mg(2+) as a cofactor. The cofactor is Mn(2+).

It carries out the reaction 2-C-methyl-D-erythritol 4-phosphate + NADP(+) = 1-deoxy-D-xylulose 5-phosphate + NADPH + H(+). Its pathway is isoprenoid biosynthesis; isopentenyl diphosphate biosynthesis via DXP pathway; isopentenyl diphosphate from 1-deoxy-D-xylulose 5-phosphate: step 1/6. Functionally, catalyzes the NADPH-dependent rearrangement and reduction of 1-deoxy-D-xylulose-5-phosphate (DXP) to 2-C-methyl-D-erythritol 4-phosphate (MEP). In Mycolicibacterium smegmatis (strain ATCC 700084 / mc(2)155) (Mycobacterium smegmatis), this protein is 1-deoxy-D-xylulose 5-phosphate reductoisomerase.